Reading from the N-terminus, the 604-residue chain is uncharacterized protein (604 aa).

The N-terminal stretch at 1–19 (MIVRILLLFIALFTFGVQA) is a signal peptide.

This sequence to H.influenzae HbpA.

This is an uncharacterized protein from Escherichia coli (strain K12).